We begin with the raw amino-acid sequence, 301 residues long: Glycine--tRNA ligase alpha subunit (301 aa).

The protein belongs to the class-II aminoacyl-tRNA synthetase family. As to quaternary structure, tetramer of two alpha and two beta subunits.

It is found in the cytoplasm. The catalysed reaction is tRNA(Gly) + glycine + ATP = glycyl-tRNA(Gly) + AMP + diphosphate. The polypeptide is Glycine--tRNA ligase alpha subunit (Nitrosospira multiformis (strain ATCC 25196 / NCIMB 11849 / C 71)).